The chain runs to 255 residues: EEF1A lysine methyltransferase 4 (255 aa).

2 residues coordinate S-adenosyl-L-methionine: W26 and Y30. At Y39 the chain carries Phosphotyrosine. S-adenosyl-L-methionine contacts are provided by residues W41, G66, 88 to 89 (DY), 113 to 114 (DV), and K130. Positions 129 to 134 (EKGTLD) match the Required for methyltransferase activity motif.

This sequence belongs to the methyltransferase superfamily.

The enzyme catalyses L-lysyl-[protein] + S-adenosyl-L-methionine = N(6)-methyl-L-lysyl-[protein] + S-adenosyl-L-homocysteine + H(+). It carries out the reaction N(6)-methyl-L-lysyl-[protein] + S-adenosyl-L-methionine = N(6),N(6)-dimethyl-L-lysyl-[protein] + S-adenosyl-L-homocysteine + H(+). The catalysed reaction is N(6),N(6)-dimethyl-L-lysyl-[protein] + S-adenosyl-L-methionine = N(6),N(6),N(6)-trimethyl-L-lysyl-[protein] + S-adenosyl-L-homocysteine + H(+). Functionally, protein-lysine methyltransferase that efficiently catalyzes three successive methylations on 'Lys-36' in eukaryotic translation elongation factor 1 alpha (EEF1A1 or EEF1A2). The sequence is that of EEF1A lysine methyltransferase 4 from Bos taurus (Bovine).